Here is a 480-residue protein sequence, read N- to C-terminus: UDP-glycosyltransferase 72B2 (480 aa).

UDP-alpha-D-glucose contacts are provided by residues Ser277, 347–349 (APQ), 364–372 (HCGWNSTLE), and 386–389 (FAEQ).

This sequence belongs to the UDP-glycosyltransferase family.

The protein is UDP-glycosyltransferase 72B2 (UGT72B2) of Arabidopsis thaliana (Mouse-ear cress).